A 144-amino-acid chain; its full sequence is Transcriptional regulator SlyA (144 aa).

The HTH marR-type domain occupies 2–135 (ESSLGSDLAR…LNNIIAKLER (134 aa)). The H-T-H motif DNA-binding region spans 49-72 (QIQLAKAIGIEQPSLVRTLDQLES).

This sequence belongs to the SlyA family. In terms of assembly, homodimer.

Functionally, transcription regulator that can specifically activate or repress expression of target genes. The sequence is that of Transcriptional regulator SlyA from Blochmanniella floridana.